The following is a 99-amino-acid chain: Turripeptide OL71 (99 aa).

Post-translationally, contains 5 disulfide bonds. Expressed by the venom duct.

The protein localises to the secreted. Functionally, acts as a neurotoxin by inhibiting an ion channel. This is Turripeptide OL71 from Iotyrris olangoensis (Sea snail).